The chain runs to 152 residues: Toxin Res (152 aa).

It belongs to the MbcT/ParT/Res family. Homodimer. Forms a complex with cognate antitoxin Xre.

Toxic component of a type II toxin-antitoxin (TA) system. Expression in E.coli inhibits cell growth; bacteriostasis is neutralized by expression of cognate antitoxin Xre. Probably depletes intracellular NAD(+). The polypeptide is Toxin Res (Yersinia enterocolitica serotype O:8 / biotype 1B (strain NCTC 13174 / 8081)).